A 445-amino-acid chain; its full sequence is Mannan endo-1,4-beta-mannosidase 2 (445 aa).

The signal sequence occupies residues Met-1–Gly-27. A substrate-binding site is contributed by Trp-110. A glycan (N-linked (GlcNAc...) asparagine) is linked at Asn-181. Asn-226 serves as a coordination point for substrate. Glu-227 functions as the Proton donor in the catalytic mechanism. Tyr-309 is a substrate binding site. Glu-349 functions as the Nucleophile in the catalytic mechanism. A substrate-binding site is contributed by Trp-391.

It belongs to the glycosyl hydrolase 5 (cellulase A) family. Expressed in stems and seeds, and at lower levels in roots and leaves.

It localises to the secreted. It catalyses the reaction Random hydrolysis of (1-&gt;4)-beta-D-mannosidic linkages in mannans, galactomannans and glucomannans.. In Oryza sativa subsp. japonica (Rice), this protein is Mannan endo-1,4-beta-mannosidase 2 (MAN2).